The sequence spans 132 residues: Phosphoribosyl-AMP cyclohydrolase (132 aa).

Mg(2+) is bound at residue D86. C87 provides a ligand contact to Zn(2+). D88 and D90 together coordinate Mg(2+). Positions 103 and 110 each coordinate Zn(2+).

This sequence belongs to the PRA-CH family. As to quaternary structure, homodimer. It depends on Mg(2+) as a cofactor. Zn(2+) is required as a cofactor.

The protein resides in the cytoplasm. The enzyme catalyses 1-(5-phospho-beta-D-ribosyl)-5'-AMP + H2O = 1-(5-phospho-beta-D-ribosyl)-5-[(5-phospho-beta-D-ribosylamino)methylideneamino]imidazole-4-carboxamide. The protein operates within amino-acid biosynthesis; L-histidine biosynthesis; L-histidine from 5-phospho-alpha-D-ribose 1-diphosphate: step 3/9. Functionally, catalyzes the hydrolysis of the adenine ring of phosphoribosyl-AMP. The protein is Phosphoribosyl-AMP cyclohydrolase of Clavibacter michiganensis subsp. michiganensis (strain NCPPB 382).